A 380-amino-acid chain; its full sequence is Chaperone protein DnaJ (380 aa).

The region spanning 5-70 is the J domain; it reads DYYEVLGVSK…QKRQTYDQYG (66 aa). A CR-type zinc finger spans residues 136–214; sequence GKEVEIKIPT…CHGQGRVEKT (79 aa). Zn(2+) is bound by residues cysteine 149, cysteine 152, cysteine 166, cysteine 169, cysteine 188, cysteine 191, cysteine 202, and cysteine 205. CXXCXGXG motif repeat units lie at residues 149–156, 166–173, 188–195, and 202–209; these read CDPCDGSG, CTTCHGAG, CPTCQGQG, and CDSCHGQG.

The protein belongs to the DnaJ family. Homodimer. Zn(2+) serves as cofactor.

The protein resides in the cytoplasm. Functionally, participates actively in the response to hyperosmotic and heat shock by preventing the aggregation of stress-denatured proteins and by disaggregating proteins, also in an autonomous, DnaK-independent fashion. Unfolded proteins bind initially to DnaJ; upon interaction with the DnaJ-bound protein, DnaK hydrolyzes its bound ATP, resulting in the formation of a stable complex. GrpE releases ADP from DnaK; ATP binding to DnaK triggers the release of the substrate protein, thus completing the reaction cycle. Several rounds of ATP-dependent interactions between DnaJ, DnaK and GrpE are required for fully efficient folding. Also involved, together with DnaK and GrpE, in the DNA replication of plasmids through activation of initiation proteins. The chain is Chaperone protein DnaJ from Pseudoalteromonas translucida (strain TAC 125).